Reading from the N-terminus, the 450-residue chain is Cysteine protease ATG4C (450 aa).

The active-site Nucleophile is the Cys-112. Catalysis depends on residues Asp-336 and His-338.

This sequence belongs to the peptidase C54 family.

The protein resides in the cytoplasm. It catalyses the reaction [protein]-C-terminal L-amino acid-glycyl-phosphatidylethanolamide + H2O = [protein]-C-terminal L-amino acid-glycine + a 1,2-diacyl-sn-glycero-3-phosphoethanolamine. Its function is as follows. Cysteine protease that plays a key role in autophagy by mediating both proteolytic activation and delipidation of ATG8 family proteins. The protease activity is required for proteolytic activation of ATG8 family proteins: cleaves the C-terminal amino acid of ATG8 proteins to reveal a C-terminal glycine. Exposure of the glycine at the C-terminus is essential for ATG8 proteins conjugation to phosphatidylethanolamine (PE) and insertion to membranes, which is necessary for autophagy. In addition to the protease activity, also mediates delipidation of ATG8 family proteins. Catalyzes delipidation of PE-conjugated forms of ATG8 proteins during macroautophagy. The protein is Cysteine protease ATG4C of Xenopus tropicalis (Western clawed frog).